Here is a 152-residue protein sequence, read N- to C-terminus: MFDILVYLFENYYTPQACPAADVLAKRLAAAGFEHEDIDDALGWLYGLAETTERCVELAHAPATGIRIYTDAEYQQLGTESIGFITFLESAGVLPAPLREIVIDRALASPETPISLSKIKIIALMVLWSQEAEIDNLVLEELLDDEGSRRLH.

It belongs to the Smg family.

The chain is Protein Smg homolog from Bordetella bronchiseptica (strain ATCC BAA-588 / NCTC 13252 / RB50) (Alcaligenes bronchisepticus).